We begin with the raw amino-acid sequence, 337 residues long: Glycerol-3-phosphate dehydrogenase [NAD(P)+] 2 (337 aa).

NADPH is bound by residues Thr-11, Trp-12, and Lys-105. Sn-glycerol 3-phosphate-binding residues include Lys-105, Gly-139, and Thr-141. Residue Ala-143 participates in NADPH binding. Positions 194, 247, 257, 258, and 259 each coordinate sn-glycerol 3-phosphate. Lys-194 acts as the Proton acceptor in catalysis. An NADPH-binding site is contributed by Arg-258. Val-282 and Glu-284 together coordinate NADPH.

Belongs to the NAD-dependent glycerol-3-phosphate dehydrogenase family.

The protein localises to the cytoplasm. The catalysed reaction is sn-glycerol 3-phosphate + NAD(+) = dihydroxyacetone phosphate + NADH + H(+). It catalyses the reaction sn-glycerol 3-phosphate + NADP(+) = dihydroxyacetone phosphate + NADPH + H(+). Its pathway is membrane lipid metabolism; glycerophospholipid metabolism. Its function is as follows. Catalyzes the reduction of the glycolytic intermediate dihydroxyacetone phosphate (DHAP) to sn-glycerol 3-phosphate (G3P), the key precursor for phospholipid synthesis. This chain is Glycerol-3-phosphate dehydrogenase [NAD(P)+] 2, found in Lactobacillus delbrueckii subsp. bulgaricus (strain ATCC 11842 / DSM 20081 / BCRC 10696 / JCM 1002 / NBRC 13953 / NCIMB 11778 / NCTC 12712 / WDCM 00102 / Lb 14).